The sequence spans 425 residues: Tyrosine--tRNA ligase (425 aa).

Residue tyrosine 37 participates in L-tyrosine binding. A 'HIGH' region motif is present at residues 42–51 (PTADSLHLGH). L-tyrosine contacts are provided by tyrosine 175 and glutamine 179. A 'KMSKS' region motif is present at residues 235 to 239 (KFGKT). Lysine 238 lines the ATP pocket. Residues 357–414 (ADLQQALVSAELVPSRGQARTMISSNAVTINGEKQADPEYTFSASDRLFDRYTLLRRG) form the S4 RNA-binding domain.

The protein belongs to the class-I aminoacyl-tRNA synthetase family. TyrS type 1 subfamily. In terms of assembly, homodimer.

It localises to the cytoplasm. The enzyme catalyses tRNA(Tyr) + L-tyrosine + ATP = L-tyrosyl-tRNA(Tyr) + AMP + diphosphate + H(+). Catalyzes the attachment of tyrosine to tRNA(Tyr) in a two-step reaction: tyrosine is first activated by ATP to form Tyr-AMP and then transferred to the acceptor end of tRNA(Tyr). The sequence is that of Tyrosine--tRNA ligase from Pectobacterium carotovorum subsp. carotovorum (strain PC1).